The following is a 326-amino-acid chain: Ribosomal RNA small subunit methyltransferase H (326 aa).

S-adenosyl-L-methionine is bound by residues 45–47 (GGH), Asp-65, Asp-113, and Gln-120. The interval 299–326 (PSAEEITRNPRSRSARLRAAERIAHDGR) is disordered. Positions 316–326 (RAAERIAHDGR) are enriched in basic and acidic residues.

Belongs to the methyltransferase superfamily. RsmH family.

Its subcellular location is the cytoplasm. It catalyses the reaction cytidine(1402) in 16S rRNA + S-adenosyl-L-methionine = N(4)-methylcytidine(1402) in 16S rRNA + S-adenosyl-L-homocysteine + H(+). In terms of biological role, specifically methylates the N4 position of cytidine in position 1402 (C1402) of 16S rRNA. In Thermomicrobium roseum (strain ATCC 27502 / DSM 5159 / P-2), this protein is Ribosomal RNA small subunit methyltransferase H.